The primary structure comprises 107 residues: Large ribosomal subunit protein eL21 (107 aa).

This sequence belongs to the eukaryotic ribosomal protein eL21 family.

The chain is Large ribosomal subunit protein eL21 (rpl21e) from Aeropyrum pernix (strain ATCC 700893 / DSM 11879 / JCM 9820 / NBRC 100138 / K1).